The chain runs to 244 residues: uncharacterized protein (244 aa).

The tract at residues 30 to 49 is disordered; it reads RETNESPKSQNPSEEATTVN. Positions 35 to 49 are enriched in polar residues; sequence SPKSQNPSEEATTVN. The next 4 helical transmembrane spans lie at 96–116, 128–148, 171–191, and 194–214; these read LWGTCVILSTLFWSYYVLSNS, LLFILIIALDALLTVSLFGLF, GFFINVLSTMVQALVTVTIAF, and FVTIDFPIYVFSSLFLYHPLS. The segment at 224–244 is disordered; sequence QLDGSGERKTDSSLVHQNPPN. The span at 235-244 shows a compositional bias: polar residues; it reads SSLVHQNPPN.

It localises to the nucleus membrane. This is an uncharacterized protein from Schizosaccharomyces pombe (strain 972 / ATCC 24843) (Fission yeast).